The chain runs to 196 residues: dTTP/UTP pyrophosphatase (196 aa).

Asp-75 acts as the Proton acceptor in catalysis.

The protein belongs to the Maf family. YhdE subfamily. A divalent metal cation serves as cofactor.

It is found in the cytoplasm. The catalysed reaction is dTTP + H2O = dTMP + diphosphate + H(+). It catalyses the reaction UTP + H2O = UMP + diphosphate + H(+). In terms of biological role, nucleoside triphosphate pyrophosphatase that hydrolyzes dTTP and UTP. May have a dual role in cell division arrest and in preventing the incorporation of modified nucleotides into cellular nucleic acids. The chain is dTTP/UTP pyrophosphatase from Wolbachia pipientis subsp. Culex pipiens (strain wPip).